Consider the following 1898-residue polypeptide: 1-phosphatidylinositol 4,5-bisphosphate phosphodiesterase epsilon-1 (1898 aa).

One can recognise a Ras-GEF domain in the interval 66-328 (FPEEVAFQLS…EREQKEKEAK (263 aa)). Disordered stretches follow at residues 419-444 (QPLDSGRGAPSPMPSGRTPGTGGVGV) and 569-722 (TNTN…GPSG). Over residues 569 to 583 (TNTNATRPNDSSLSS) the composition is skewed to polar residues. Residues 590–605 (SRLKNLKNAMQKKLRG) are compositionally biased toward basic residues. Low complexity-rich tracts occupy residues 625 to 637 (PPSIKSQISSQSG), 666 to 687 (YTPRSRTPTSSSYGGRSVGGRS), and 701 to 716 (SGSISSSGQMSIQVSG). Positions 910–1058 (EDLRYPLSHY…MKNKILIKNK (149 aa)) constitute a PI-PLC X-box domain. Catalysis depends on residues His925 and His970. Disordered regions lie at residues 1082–1178 (QLNL…DRKT) and 1238–1274 (EEGPASASLSFSSRARTPSNLLNTPAPPRRQRSSTQL). The segment covering 1098 to 1123 (TVDEVEDDDLDEFLDDEENEEDDQEE) has biased composition (acidic residues). Basic and acidic residues predominate over residues 1124-1144 (VQVRSEKEDSPKTSKRAEKSA). Over residues 1146 to 1155 (NIKQQDSLCS) the composition is skewed to polar residues. 2 stretches are compositionally biased toward low complexity: residues 1163–1172 (KPSTSKTTSK) and 1242–1253 (ASASLSFSSRAR). One can recognise a PI-PLC Y-box domain in the interval 1279-1385 (AAEFLGSVRA…CGYQLKPRCL (107 aa)). A C2 domain is found at 1391-1517 (LLYNKFLPLS…PLRTPTNLPI (127 aa)). Residues 1570-1665 (QIFVLRITGA…RRFVLRKKGS (96 aa)) form the Ras-associating 1 domain. Residues 1680-1694 (GTSGSSTSVSPSPLT) show a composition bias toward low complexity. The segment at 1680-1711 (GTSGSSTSVSPSPLTKDGHVKSASSNQLHGRS) is disordered. A Ras-associating 2 domain is found at 1738–1857 (DTFLVCVHNV…GRFVLENRKD (120 aa)).

In terms of assembly, interacts (via Ras-associating domain 1) with let-60 (in GTP-bound form). It depends on Ca(2+) as a cofactor. As to expression, expressed in the spermatheca, vulva, intestine and excretory cells. Expressed in sensory neurons AWC, AFD, ASE, ASG and BAG, interneurons, ventral nerve cord neurons and tail neurons. Expressed in body muscles.

The catalysed reaction is a 1,2-diacyl-sn-glycero-3-phospho-(1D-myo-inositol-4,5-bisphosphate) + H2O = 1D-myo-inositol 1,4,5-trisphosphate + a 1,2-diacyl-sn-glycerol + H(+). In terms of biological role, the production of the second messenger molecules diacylglycerol (DAG) and inositol 1,4,5-trisphosphate (IP3) is mediated by activated phosphatidylinositol-specific phospholipase C enzymes. plc-1 is a bifunctional enzyme which also regulates small GTPases of the Ras superfamily through its Ras guanine-exchange factor (RasGEF) activity. By activating IP3 receptor itr-1-mediated intracellular Ca(2+) release via the production of IP3, regulates ovulation by controlling contraction and/or dilation of the distal spermatheca valve during oocyte entry and the timing of the dilation of the spermatheca-uterine valve during oocyte exit. In a similar manner, plays an essential role in epidermal morphogenesis by regulating migration of epidermal cells during ventral closure and to a lesser extent by regulating epidermal cell dorsal intercalation. Involved in the immune response to S.aureus bacterium by activating kinase dkf-1 via the production of DAG which in turn activates transcription factor hlh-30. In ASER neurons, required for adjusting the orientation behavior in salt gradients based on the memory of previous salt concentration encountered. The chain is 1-phosphatidylinositol 4,5-bisphosphate phosphodiesterase epsilon-1 from Caenorhabditis elegans.